Reading from the N-terminus, the 589-residue chain is Netrin-G2 (589 aa).

An N-terminal signal peptide occupies residues 1-17 (MLRLLALFLHCLPLVSG). Disulfide bonds link C22–C39, C61–C81, and C69–C77. The region spanning 35–286 (EFYACQPKVM…AISNIEVIGR (252 aa)) is the Laminin N-terminal domain. Residues 69-88 (CSHENPYLCSNECDASNPDL) form an NGL discriminant loop I region. N-linked (GlcNAc...) asparagine glycosylation is found at N122 and N128. An intrachain disulfide couples C171 to C195. An NGL discriminant loop II region spans residues 201-203 (RWA). An NGL discriminant loop III region spans residues 264-267 (TYVQ). Intrachain disulfides connect C287-C296, C289-C305, C307-C316, C319-C344, C413-C422, C415-C433, C436-C445, C448-C466, C469-C481, C471-C487, C489-C498, C501-C511, C516-C529, C523-C535, and C537-C546. Laminin EGF-like domains lie at 287–346 (CKCN…ACAA), 413–468 (CECY…VCIE), and 469–513 (CNCN…GCYP). N310 carries an N-linked (GlcNAc...) asparagine glycan. N-linked (GlcNAc...) asparagine glycosylation occurs at N455. Residue N482 is glycosylated (N-linked (GlcNAc...) asparagine). G566 is lipidated: GPI-anchor amidated glycine. Residues 567–589 (IVPRPDTLLGCLLLLGLAARLAC) constitute a propeptide, removed in mature form.

Interacts with LRRC4. N-glycosylated. In terms of tissue distribution, expression is restricted primarily to neurons of the CNS, particularly in the cerebral cortex, habenular nucleus and superior colliculus. Low levels in lung, kidney, heart and spleen.

The protein resides in the cell membrane. Functionally, involved in controlling patterning and neuronal circuit formation at the laminar, cellular, subcellular and synaptic levels. Promotes neurite outgrowth of both axons and dendrites. The protein is Netrin-G2 (Ntng2) of Mus musculus (Mouse).